The primary structure comprises 573 residues: 2-succinyl-5-enolpyruvyl-6-hydroxy-3-cyclohexene-1-carboxylate synthase (573 aa).

It belongs to the TPP enzyme family. MenD subfamily. As to quaternary structure, homodimer. Requires Mg(2+) as cofactor. Mn(2+) is required as a cofactor. The cofactor is thiamine diphosphate.

It catalyses the reaction isochorismate + 2-oxoglutarate + H(+) = 5-enolpyruvoyl-6-hydroxy-2-succinyl-cyclohex-3-ene-1-carboxylate + CO2. Its pathway is quinol/quinone metabolism; 1,4-dihydroxy-2-naphthoate biosynthesis; 1,4-dihydroxy-2-naphthoate from chorismate: step 2/7. It participates in quinol/quinone metabolism; menaquinone biosynthesis. In terms of biological role, catalyzes the thiamine diphosphate-dependent decarboxylation of 2-oxoglutarate and the subsequent addition of the resulting succinic semialdehyde-thiamine pyrophosphate anion to isochorismate to yield 2-succinyl-5-enolpyruvyl-6-hydroxy-3-cyclohexene-1-carboxylate (SEPHCHC). In Shewanella sp. (strain W3-18-1), this protein is 2-succinyl-5-enolpyruvyl-6-hydroxy-3-cyclohexene-1-carboxylate synthase.